A 150-amino-acid polypeptide reads, in one-letter code: MKPADWLILQKKVRFGDCDSAGVIHFHNLLKWSHEAWEESIEIYGIPSQDIFPDFSIRKSQIIFPIVNCEANFLAPIKIGDLLKVKIVPHKINTHLFQVNSFFIKNGNKVAEGKIIHCSLDIDSRDKIELPDQLERWIEASNVSTNLKEC.

Residue D19 is part of the active site.

Belongs to the 4-hydroxybenzoyl-CoA thioesterase family. DHNA-CoA hydrolase subfamily.

It catalyses the reaction 1,4-dihydroxy-2-naphthoyl-CoA + H2O = 1,4-dihydroxy-2-naphthoate + CoA + H(+). It participates in cofactor biosynthesis; phylloquinone biosynthesis. The protein operates within quinol/quinone metabolism; 1,4-dihydroxy-2-naphthoate biosynthesis; 1,4-dihydroxy-2-naphthoate from chorismate: step 7/7. Functionally, catalyzes the hydrolysis of 1,4-dihydroxy-2-naphthoyl-CoA (DHNA-CoA) to 1,4-dihydroxy-2-naphthoate (DHNA), a reaction involved in phylloquinone (vitamin K1) biosynthesis. This chain is 1,4-dihydroxy-2-naphthoyl-CoA hydrolase, found in Prochlorococcus marinus (strain AS9601).